The primary structure comprises 89 residues: Small ribosomal subunit protein uS15 (89 aa).

It belongs to the universal ribosomal protein uS15 family. As to quaternary structure, part of the 30S ribosomal subunit. Forms a bridge to the 50S subunit in the 70S ribosome, contacting the 23S rRNA.

Its function is as follows. One of the primary rRNA binding proteins, it binds directly to 16S rRNA where it helps nucleate assembly of the platform of the 30S subunit by binding and bridging several RNA helices of the 16S rRNA. Functionally, forms an intersubunit bridge (bridge B4) with the 23S rRNA of the 50S subunit in the ribosome. The sequence is that of Small ribosomal subunit protein uS15 from Shewanella putrefaciens (strain CN-32 / ATCC BAA-453).